Reading from the N-terminus, the 137-residue chain is Ig heavy chain V region MOPC 315 (137 aa).

An N-terminal signal peptide occupies residues 1-18 (MKVLSLLYLLTAIPGIMS). Residues 19 to 48 (DVQLQESGPGLVKPSQSLSLTCSVTGYSIT) form a framework-1 region. A disulfide bridge connects residues C40 and C114. The complementarity-determining-1 stretch occupies residues 49–54 (SGYFWN). The tract at residues 55-68 (WIRQFPGNKLEWLG) is framework-2. The tract at residues 69-84 (FIKYDGSNGYNPSLKN) is complementarity-determining-2. The segment at 85 to 116 (RVSITRDTSENQFFLKLNSVTTEDTATYYCAG) is framework-3. Residues 117 to 126 (DNDHLYYFDY) are complementarity-determining-3. A framework-4 region spans residues 127 to 137 (WGQGTTLTVSS).

The sequence is that of Ig heavy chain V region MOPC 315 from Mus musculus (Mouse).